The chain runs to 904 residues: Patched domain-containing protein 4 (904 aa).

The helical transmembrane segment at 41-61 (HPVFFLTVPAVLTITFGLSAL) threads the bilayer. Asn149 is a glycosylation site (N-linked (GlcNAc...) asparagine). An SSD domain is found at 291-450 (TRSKVLVSLV…FSFFGSCLVF (160 aa)). The next 6 membrane-spanning stretches (helical) occupy residues 295–312 (VLVSLVLILTTATLSSSM), 323–343 (GLLGVLTVCISIATAAGIFFI), 351–371 (TLLGIPFFAMGHGTKGVFELL), 394–414 (VMVTYTMTSSLYFITFGMGAS), 431–451 (VSILLNYFYIFSFFGSCLVFA), and 523–543 (PFVVILYLIYASFSFMGCLQI). An N-linked (GlcNAc...) asparagine glycan is attached at Asn625. 3 consecutive transmembrane segments (helical) span residues 718–738 (PVLIAGFGVLLVLILTFFLVI), 744–764 (FWLILSVTSIELGVLGLMTLW), and 771–791 (ISILCLIYTLNFAIDHCAPLL). N-linked (GlcNAc...) asparagine glycosylation occurs at Asn820. Transmembrane regions (helical) follow at residues 823-843 (SFLIGLLPLLFVPSNLTFTLF) and 845-865 (CLLLTGGCTLLHCFVILPVFL).

Belongs to the patched family.

The protein resides in the membrane. In terms of biological role, could act as a repressor of canonical hedgehog signaling by antagonizing the effects of SMO, as suggested by down-regulation of hedgehog target genes, including GLI1, PTCH1, and PTCH2 in PTCHD4-expressing cells. In Mus musculus (Mouse), this protein is Patched domain-containing protein 4 (Ptchd4).